Consider the following 743-residue polypeptide: Putative cation exchanger C3A12.06c (743 aa).

A run of 13 helical transmembrane segments spans residues 13–33 (LILL…HRIS), 109–129 (FPVL…IGIS), 138–158 (LVTI…TFLA), 182–202 (IGEL…SVCL), 213–233 (FLRD…FVLH), 239–258 (IWQS…FVFF), 528–548 (LRLL…ITGG), 551–571 (LYIY…LYYY), 580–600 (FLPW…STIA), 609–629 (ALGV…FAAG), 649–669 (MAMG…IGIS), 690–710 (LSIT…YVPL), and 718–738 (VLGL…IVVE).

It belongs to the Ca(2+):cation antiporter (CaCA) (TC 2.A.19) family.

It is found in the endoplasmic reticulum membrane. Putative cation exchanger. This chain is Putative cation exchanger C3A12.06c, found in Schizosaccharomyces pombe (strain 972 / ATCC 24843) (Fission yeast).